Reading from the N-terminus, the 59-residue chain is Protein translocase subunit SecE (59 aa).

Residues 35-55 traverse the membrane as a helical segment; that stretch reads IVAIGIAIIGVVGFIIVLIGE.

It belongs to the SecE/SEC61-gamma family. As to quaternary structure, component of the Sec protein translocase complex. Heterotrimer consisting of SecY (alpha), SecG (beta) and SecE (gamma) subunits. The heterotrimers can form oligomers, although 1 heterotrimer is thought to be able to translocate proteins. Interacts with the ribosome. May interact with SecDF, and other proteins may be involved.

It is found in the cell membrane. Functionally, essential subunit of the Sec protein translocation channel SecYEG. Clamps together the 2 halves of SecY. May contact the channel plug during translocation. The sequence is that of Protein translocase subunit SecE from Methanobrevibacter smithii (strain ATCC 35061 / DSM 861 / OCM 144 / PS).